The sequence spans 603 residues: Penicillin-binding protein activator LpoA (603 aa).

An N-terminal signal peptide occupies residues 1 to 24 (MINHKRLSVPRILTPVALAITLAA). Cys-25 carries the N-palmitoyl cysteine lipid modification. Cys-25 is lipidated: S-diacylglycerol cysteine.

Belongs to the LpoA family. As to quaternary structure, interacts with PBP1a.

It localises to the cell outer membrane. Regulator of peptidoglycan synthesis that is essential for the function of penicillin-binding protein 1A (PBP1a). The sequence is that of Penicillin-binding protein activator LpoA from Vibrio antiquarius (strain Ex25).